Reading from the N-terminus, the 104-residue chain is MTNRLVLSGTVCRAPLRKVSPSGIPHCQFVLEHRSVQEEAGFHRQAWCQMPVIVSGHENQAITHSITVGSRITVQGFISCHKAKNGLSKMVLHAEQIELIDSGD.

In terms of domain architecture, SSB spans 2-101 (TNRLVLSGTV…LHAEQIELID (100 aa)). Cys-48 and Cys-80 are oxidised to a cystine. An L45 loop motif is present at residues 82-89 (KAKNGLSK).

This sequence belongs to the PriB family. In terms of assembly, homodimer. Primosome assembly occurs via a 'hand-off' mechanism. PriA binds to replication forks, subsequently PriB then DnaT bind; DnaT then displaces ssDNA to generate the helicase loading substrate, which allows DnaC to load helicase DnaB onto the fork. ssDNA is displaced from the PriB-ssDNA complex by DnaT. In a PriA-PriB-replication fork structure, movement of the PriA CRR domain exposes a surface to which PriB binds and contacts ssDNA emerging from the PriA pore. Binds PriA; binding is improved in the presence of ssDNA. Weakly binds DnaT; binding is improved in the presence of ssDNA; as DnaT levels increase PriB dissociates from ssDNA. Component of the replication restart primosome, which is composed of PriA, PriB, PriC, DnaB and DnaT; DnaG primase associates transiently with this complex. Component of the preprimosomal complex composed of one monomer of PriC and DnaT, two monomers of PriA, two dimers of PriB and one hexamer of DnaB. Post-translationally, an intersubunit disulfide bond is seen in some crystals.

In terms of biological role, involved in the restart of stalled replication forks, which reloads the replicative helicase (DnaB) on sites other than the origin of replication; the PriA-PriB pathway is the major replication restart pathway. There are several restart pathways, the PriA-PriB pathway is subdivided into 2 distinct pathways. priB and priC have redundant roles in the cell. During primosome assembly it facilitates complex formation between PriA and DnaT on DNA; stabilizes PriA on DNA, presumably by preventing or inhibiting PriA DNA translocation activity. Forms a branched DNA-PriA-PriB complex when the lagging strand is single-stranded (ss)DNA. Binds ssDNA in the presence and absence of ssDNA DNA-binding protein (SSB), does not bind branched structures. DNA binding, forming spiral filaments on ssDNA, is cooperative. Stimulates the helicase activity of PriA. The homodimer binds 12 nucleotides of ssDNA. Binds homo-pyrimidine tracts better than homo-purine tracts. Functionally, genetic interactions among priB, dam, lexA, nagC, polA, rdgB, rdgB, rep and uup link the PriA-PriB replication restart pathway to DNA double-strand break repair. This chain is Replication restart protein PriB, found in Escherichia coli (strain K12).